A 200-amino-acid polypeptide reads, in one-letter code: Rho GDP-dissociation inhibitor 2 (200 aa).

The tract at residues 1–40 (MTEKAPEPHVEEDDDELDGKLNYKPPPQKSLKELQEMDKD) is disordered. T2 carries the post-translational modification N-acetylthreonine. K20 carries the post-translational modification N6-acetyllysine. Y23 bears the Phosphotyrosine mark. 5 positions are modified to N6-acetyllysine: K24, K39, K46, K101, and K123. Positions 30 to 40 (SLKELQEMDKD) are enriched in basic and acidic residues. S144 carries the phosphoserine modification. N6-acetyllysine is present on K174.

It belongs to the Rho GDI family. As to quaternary structure, interacts with RHOA. Interacts with RAC1. Interacts with RAC2. Interacts with CDC42.

The protein resides in the cytoplasm. The protein localises to the cytosol. Functionally, regulates the GDP/GTP exchange reaction of the Rho proteins by inhibiting the dissociation of GDP from them, and the subsequent binding of GTP to them. Regulates reorganization of the actin cytoskeleton mediated by Rho family members. The protein is Rho GDP-dissociation inhibitor 2 (ARHGDIB) of Bos taurus (Bovine).